We begin with the raw amino-acid sequence, 243 residues long: Pyridoxine 5'-phosphate synthase (243 aa).

Asn9 provides a ligand contact to 3-amino-2-oxopropyl phosphate. 1-deoxy-D-xylulose 5-phosphate is bound at residue 11–12; that stretch reads DH. A 3-amino-2-oxopropyl phosphate-binding site is contributed by Arg20. Residue His45 is the Proton acceptor of the active site. 1-deoxy-D-xylulose 5-phosphate is bound by residues Arg47 and His52. The Proton acceptor role is filled by Glu72. Residue Thr102 participates in 1-deoxy-D-xylulose 5-phosphate binding. The active-site Proton donor is His193. Residues Gly194 and 215–216 each bind 3-amino-2-oxopropyl phosphate; that span reads GH.

The protein belongs to the PNP synthase family. Homooctamer; tetramer of dimers.

Its subcellular location is the cytoplasm. The enzyme catalyses 3-amino-2-oxopropyl phosphate + 1-deoxy-D-xylulose 5-phosphate = pyridoxine 5'-phosphate + phosphate + 2 H2O + H(+). The protein operates within cofactor biosynthesis; pyridoxine 5'-phosphate biosynthesis; pyridoxine 5'-phosphate from D-erythrose 4-phosphate: step 5/5. In terms of biological role, catalyzes the complicated ring closure reaction between the two acyclic compounds 1-deoxy-D-xylulose-5-phosphate (DXP) and 3-amino-2-oxopropyl phosphate (1-amino-acetone-3-phosphate or AAP) to form pyridoxine 5'-phosphate (PNP) and inorganic phosphate. This is Pyridoxine 5'-phosphate synthase from Yersinia pestis.